A 593-amino-acid polypeptide reads, in one-letter code: Glutamate decarboxylase 1 (593 aa).

Over residues 1 to 12 the composition is skewed to low complexity; sequence MASSTPSPATSS. The disordered stretch occupies residues 1–22; sequence MASSTPSPATSSNAGADPNTTN. Ser-77 carries the phosphoserine modification. 189–191 serves as a coordination point for 4-aminobutanoate; that stretch reads QLS. Residue Lys-404 is modified to N6-(pyridoxal phosphate)lysine. A 4-aminobutanoate-binding site is contributed by Arg-566.

Belongs to the group II decarboxylase family. In terms of assembly, homodimer. Requires pyridoxal 5'-phosphate as cofactor. Expressed in brain and pancreatic islets.

It catalyses the reaction L-glutamate + H(+) = 4-aminobutanoate + CO2. Functionally, catalyzes the synthesis of the inhibitory neurotransmitter gamma-aminobutyric acid (GABA) with pyridoxal 5'-phosphate as cofactor. This is Glutamate decarboxylase 1 (Gad1) from Rattus norvegicus (Rat).